The chain runs to 161 residues: Troponin C, slow skeletal and cardiac muscles (161 aa).

An N-acetylmethionine modification is found at methionine 1. 4 EF-hand domains span residues 16–51 (QKNE…LGQN), 52–87 (PTPE…CMKD), 92–127 (KTEE…TGET), and 128–161 (ITED…KGVE). Ca(2+)-binding residues include aspartate 65, aspartate 67, serine 69, threonine 71, aspartate 105, asparagine 107, aspartate 109, tyrosine 111, glutamate 116, asparagine 143, aspartate 145, arginine 147, and glutamate 152.

This sequence belongs to the troponin C family.

Its function is as follows. Troponin is the central regulatory protein of striated muscle contraction. Tn consists of three components: Tn-I which is the inhibitor of actomyosin ATPase, Tn-T which contains the binding site for tropomyosin and Tn-C. The binding of calcium to Tn-C abolishes the inhibitory action of Tn on actin filaments. The protein is Troponin C, slow skeletal and cardiac muscles (TNNC1) of Coturnix japonica (Japanese quail).